We begin with the raw amino-acid sequence, 112 residues long: Cytochrome c 2.1 (112 aa).

The heme c site is built by Cys-20, Cys-23, His-24, and Met-85.

This sequence belongs to the cytochrome c family. In terms of processing, binds 1 heme c group covalently per subunit.

It localises to the mitochondrion intermembrane space. Electron carrier protein. The oxidized form of the cytochrome c heme group can accept an electron from the heme group of the cytochrome c1 subunit of cytochrome reductase. Cytochrome c then transfers this electron to the cytochrome oxidase complex, the final protein carrier in the mitochondrial electron-transport chain. The polypeptide is Cytochrome c 2.1 (Caenorhabditis briggsae).